The primary structure comprises 377 residues: Probable dehydratase NIT22 (377 aa).

Residues Lys101 and Arg196 each coordinate NADP(+). Residues 220 to 243 form a disordered region; that stretch reads ERGPKMNEHVPSTPPRRPDAVSSF. The MaoC-like domain maps to 233–332; it reads PPRRPDAVSS…ILMWDMGLCK (100 aa). Residues Thr265 and Ile287 each coordinate NADP(+).

This sequence belongs to the short-chain dehydrogenases/reductases (SDR) family.

It participates in siderophore biosynthesis. Functionally, probable dehydratase; part of the gene cluster that mediates the biosynthesis of hydroxamate-containing siderophores that play a critical role in virulence via intracellular iron acquisition during macrophage infection. The sequence is that of Probable dehydratase NIT22 from Ajellomyces capsulatus (Darling's disease fungus).